Here is a 310-residue protein sequence, read N- to C-terminus: Olfactory receptor 2A14 (310 aa).

At 1-24 the chain is on the extracellular side; that stretch reads MEGNKTWITDITLPRFQVGPALEI. N-linked (GlcNAc...) asparagine glycosylation occurs at asparagine 4. The helical transmembrane segment at 25–48 threads the bilayer; it reads LLCGLFSAFYTLTLLGNGVIFGII. Over 49 to 56 the chain is Cytoplasmic; it reads CLDCKLHT. The helical transmembrane segment at 57–78 threads the bilayer; that stretch reads PMYFFLSHLAIVDISYASNYVP. Over 79–99 the chain is Extracellular; the sequence is KMLTNLMNQESTISFFPCIMQ. Cysteines 96 and 188 form a disulfide. A helical transmembrane segment spans residues 100-119; sequence TFLYLAFAHVECLILVVMSY. The Cytoplasmic segment spans residues 120-138; the sequence is DRYADICHPLRYNSLMSWR. Residues 139-157 traverse the membrane as a helical segment; the sequence is VCTVLAVASWVFSFLLALV. At 158–194 the chain is on the extracellular side; the sequence is PLVLILSLPFCGPHEINHFFCEILSVLKLACADTWLN. Residues 195 to 218 traverse the membrane as a helical segment; the sequence is QVVIFAACVFILVGPLCLVLVSYL. Over 219-235 the chain is Cytoplasmic; the sequence is RILAAILRIQSGEGRRK. A helical transmembrane segment spans residues 236–258; it reads AFSTCSSHLCVVGLFFGSAIVTY. Residues 259-271 lie on the Extracellular side of the membrane; that stretch reads MAPKSRHPEEQQK. A helical membrane pass occupies residues 272 to 291; sequence VLSLFYSLFNPMLNPLIYSL. The Cytoplasmic portion of the chain corresponds to 292-310; sequence RNAEVKGALRRALRKERLT.

It belongs to the G-protein coupled receptor 1 family.

The protein resides in the cell membrane. Functionally, odorant receptor. This chain is Olfactory receptor 2A14 (OR2A14), found in Homo sapiens (Human).